The primary structure comprises 140 residues: Large ribosomal subunit protein bL17 (140 aa).

It belongs to the bacterial ribosomal protein bL17 family. As to quaternary structure, part of the 50S ribosomal subunit. Contacts protein L32.

This chain is Large ribosomal subunit protein bL17, found in Rhizorhabdus wittichii (strain DSM 6014 / CCUG 31198 / JCM 15750 / NBRC 105917 / EY 4224 / RW1) (Sphingomonas wittichii).